Consider the following 85-residue polypeptide: Large ribosomal subunit protein bL27 (85 aa).

The interval 1 to 24 (MAHKKGVGSSRNGRDSDGQRLGCK) is disordered.

This sequence belongs to the bacterial ribosomal protein bL27 family.

The polypeptide is Large ribosomal subunit protein bL27 (Geotalea daltonii (strain DSM 22248 / JCM 15807 / FRC-32) (Geobacter daltonii)).